A 66-amino-acid polypeptide reads, in one-letter code: MKADELRKLDNEQLRAKLKDCYEELFNLRFQQVMGKLTATGRPRMVRRDIARIKTILRERELGIES.

The protein belongs to the universal ribosomal protein uL29 family.

The polypeptide is Large ribosomal subunit protein uL29 (Roseiflexus castenholzii (strain DSM 13941 / HLO8)).